A 76-amino-acid polypeptide reads, in one-letter code: MDADKVKEEPQSVWEKAKPMFTNKPASGYYDPCQDFADRSIKCMRRNGNDKTMCSDYFQAYRDCKKEWTTQRKNKS.

The CHCH domain maps to 30 to 72; that stretch reads YDPCQDFADRSIKCMRRNGNDKTMCSDYFQAYRDCKKEWTTQR. 2 short sequence motifs (cx9C motif) span residues 33–43 and 54–64; these read CQDFADRSIKC and CSDYFQAYRDC. Cystine bridges form between Cys33–Cys64 and Cys43–Cys54.

It is found in the mitochondrion intermembrane space. Required for the assembly of cytochrome c oxidase. The protein is Cytochrome c oxidase-assembly factor COX23, mitochondrial (COX23) of Paracoccidioides brasiliensis.